A 1335-amino-acid polypeptide reads, in one-letter code: MPHPPGSDVLVFFVNGRKVTERDVDPEVTLLTYLRRNLGLTGTKSACGGGSCGTCTVMLSRFDLASRKPRHIAVTACLVPLCSLHGAAVTTVEGVGSIRTRVHPVQERIAKSHGTQCGFCTPGMVMSLYALLRSHPQPSEEQLLEALAGNLCRCTGYRPILESGRTFCLDSASCGQHGARQCCLDQPGDGTCPPGRNGPQAHMCSELIPRTEFQPWDPTQEPIFPPELMRMAESPVQPSLTFRGDRVTWVSPGSLQELLALRARHPEAPLVLGNTALGPAQRSQGRVHPLLISPARIPELSTVTETSDGLTIGASCSLAQLQDILAKSISQLPVEKTQTLRALAKALRSVAGLQVRNLASLGGHVMSLHSYSDLNPILAVGQAALHLRSEGGARLISLDEHFLAGVVSASLQPGEILESVHIPHSQKWEFVFSFRQAQAPQNASPHVSAGMRVRFTEGTDTIEDLSIAYGGVGTTTVMAPQACQRLLGRHWTEETLDEACRLVLGEVTIPGAAPGGRVEFRRTLLVSFLFRFYLQVLQELKAHRFLKPPCTPRTLSDTWKYPQLPDQTLGALEDVPIMVPRGVQMYERVDPQQPPQDPVGRSIMHLSGLKHATGEAVFCDDLPRVDKELFMALVTSTRPHAKIVSVDPAEALRLPGVVAIVTAEDIPGTNGTEDDKLLAVDKVLCVGQVICAVVAETDVQARQATGSVRVTYEDLEPVVLSIQDAIGHSSFLCPEKKLELGNTEEAFEDVDHILEGEVHVGGQEHFYMETQRVLVIPKVEDQELDIYASTQDPAHMQKTVSSTLNVPLNRVTCHVKRVGGGFGGKQGRSAMLGAIAAVGAIKTGRPVRLVLDRDEDMLITGGRHPLFGKYKVGFMDSGRIKALDIQCYINGGCVLDYSELVIEFLILKLENAYKIRNLRFRGRACRTNLPSNTAFRGFGFPQGALVIESCITAVAAKCGLLPEKVREKNMYRTVDKTIYKQAFSPEPLHRCWAECLEQADVPGRRALADAFNRQSPWRKRGIAVVPMKFSVGFAATSYHQAAALVHIYTDGSVLVTHGGNELGQGIHTKMLQVASRELRVPLCRLHIQETSTATVPNTVTTAASVGADVNGRAVQNACQTLLKRLEPIMKKNPEGTWEAWVEAAFEQRISLSATGYFRGYKAFMDWEKGEGEPFPYCVFGAACSEVEIDCLTGAHRKLRTDIVMDAGCSLNPALDIGQVEGAFLQGAGLYTTEELHYSPEGALLSGGPEEYKIPTAADVPEKLNVTLLPSAQAQTGLTIYSSKGLGESGMFLGSSVFFAIQDAVAAARRDRGLAEDFTVPREDPGTCKPWSISVA.

The 2Fe-2S ferredoxin-type domain maps to Asp8–Val95. [2Fe-2S] cluster is bound by residues Cys47, Cys52, Cys55, and Cys77. Gln116 lines the Mo-molybdopterin pocket. Residues Cys117, Cys120, Cys152, and Cys154 each coordinate [2Fe-2S] cluster. Cys154 provides a ligand contact to Mo-molybdopterin. In terms of domain architecture, FAD-binding PCMH-type spans Phe242–Lys427. Residues Leu270–Leu277, Ala351, Ser360, His364, Asp373, and Leu417 contribute to the FAD site. Mo-molybdopterin-binding positions include Gly821–Phe822, Ala1103–Gly1106, Gln1218, and Leu1285. The active-site Proton acceptor; for azaheterocycle hydroxylase activity is the Glu1287.

The protein belongs to the xanthine dehydrogenase family. Homodimer. Requires [2Fe-2S] cluster as cofactor. It depends on FAD as a cofactor. Mo-molybdopterin serves as cofactor. As to expression, detected in kidney, Harderian gland and olfactory mucosa.

It is found in the cytoplasm. The catalysed reaction is an aldehyde + O2 + H2O = a carboxylate + H2O2 + H(+). Oxidase with broad substrate specificity, oxidizing aromatic azaheterocycles, such as phthalazine, as well as aldehydes, such as benzaldehyde and retinal. The sequence is that of Aldehyde oxidase 2 (AOX2) from Cavia porcellus (Guinea pig).